A 126-amino-acid chain; its full sequence is Hydrogenase maturation factor HypA (126 aa).

His2 is a binding site for Ni(2+). 4 residues coordinate Zn(2+): Cys78, Cys81, Cys97, and Cys100.

The protein belongs to the HypA/HybF family.

Functionally, involved in the maturation of [NiFe] hydrogenases. Required for nickel insertion into the metal center of the hydrogenase. The sequence is that of Hydrogenase maturation factor HypA from Methanococcus maripaludis (strain C5 / ATCC BAA-1333).